We begin with the raw amino-acid sequence, 252 residues long: Trans-aconitate 2-methyltransferase (252 aa).

The protein belongs to the methyltransferase superfamily. Tam family.

Its subcellular location is the cytoplasm. It carries out the reaction trans-aconitate + S-adenosyl-L-methionine = (E)-3-(methoxycarbonyl)pent-2-enedioate + S-adenosyl-L-homocysteine. Functionally, catalyzes the S-adenosylmethionine monomethyl esterification of trans-aconitate. This is Trans-aconitate 2-methyltransferase from Shigella flexneri serotype 5b (strain 8401).